We begin with the raw amino-acid sequence, 611 residues long: Pleckstrin homology domain-containing family N member 1 (611 aa).

Residues 1–45 (MGNSHCVPQAPRRLRASFSRKPSLKGNREDSARMSAGLPGPEAAR) are disordered. Residue Gly2 is the site of N-myristoyl glycine attachment. An interaction with C1QBP region spans residues 61 to 100 (TDILDLENQRENLEQPFLSVFKKGRRRVPVRNLGKVVHYA). 2 consecutive PH domains span residues 96 to 192 (VVHY…TALL) and 222 to 319 (AVCA…THRE). The residue at position 302 (Tyr302) is a Phosphotyrosine. Disordered regions lie at residues 323–424 (PLPG…PVTP), 438–468 (ESSP…TSHR), and 483–611 (MQSA…VQWI). Residues 341–350 (GSLSSGGQTS) are compositionally biased toward low complexity. Residues 360-391 (STRTSHSLPESSVPSTVGCSSQHTPDQANSDR) are compositionally biased toward polar residues. Residue Tyr456 is modified to Phosphotyrosine. Positions 498–509 (VPVSVPASDPRS) are enriched in low complexity. Ser559 is subject to Phosphoserine. Positions 570 to 585 (RSPRRSRDPGYDHLWD) are enriched in basic and acidic residues.

Found in a complex with cytochrome c mRNA and various ribosomal proteins. Interacts with C1QBP. Interacts with ELAVL1. Interacts with BID. Post-translationally, phosphorylation is essential for its mitochondrial localization and regulates its interaction with C1QBP. In terms of tissue distribution, ubiquitous. Epressed in several cancer cell lines of differing origin.

The protein resides in the cell membrane. Its subcellular location is the mitochondrion. It localises to the mitochondrion membrane. Functionally, controls the stability of the leptin mRNA harboring an AU-rich element (ARE) in its 3' UTR, in cooperation with the RNA stabilizer ELAVL1. Decreases the stability of the leptin mRNA by antagonizing the function of ELAVL1 by inducing its atypical recruitment from the nucleus to the cytosol. Binds to cardiolipin (CL), phosphatidic acid (PA), phosphatidylinositol 4-phosphate (PtdIns(4)P) and phosphatidylserine (PS). Promotes apoptosis by enhancing BAX-BAK hetero-oligomerization via interaction with BID in colon cancer cells. The protein is Pleckstrin homology domain-containing family N member 1 (PLEKHN1) of Homo sapiens (Human).